The primary structure comprises 428 residues: C4-dicarboxylate transport protein (428 aa).

Helical transmembrane passes span serine 7–proline 27, phenylalanine 40–isoleucine 60, leucine 75–valine 95, alanine 143–leucine 163, proline 196–phenylalanine 216, leucine 221–alanine 241, isoleucine 306–glycine 326, phenylalanine 329–glycine 349, and isoleucine 351–isoleucine 371.

This sequence belongs to the dicarboxylate/amino acid:cation symporter (DAACS) (TC 2.A.23) family.

It localises to the cell inner membrane. Responsible for the transport of dicarboxylates such as succinate, fumarate, and malate from the periplasm across the membrane. This is C4-dicarboxylate transport protein from Solibacter usitatus (strain Ellin6076).